The sequence spans 244 residues: MDKKLHSVSPESGPNSNLDLTPQLAQSSSAFLFEPKNIVPFETALGWQKNFLKNLIEEPFSPQAVWLLEHFSCFTMGRGSDKKNLLFEENNSPLPVFSIERGGEVTHHMPGQIVGYLVLNLSLHKKDLAWYLRELEQVLIDVLDLLGIEGKRVDGLTGVWCEDKKVGSIGIGCKRWVTQHGFSLNVDCDLIGFEKIIPCGLDKVKVGKLSDWIPGIKVCDVTPLLRESVKRRFKLNWEKINQSL.

A disordered region spans residues 1–21 (MDKKLHSVSPESGPNSNLDLT). A compositionally biased stretch (polar residues) spans 9–21 (SPESGPNSNLDLT). The region spanning 59–244 (PFSPQAVWLL…LNWEKINQSL (186 aa)) is the BPL/LPL catalytic domain. Substrate contacts are provided by residues 101 to 108 (RGGEVTHH), 168 to 170 (SIG), and 181 to 183 (GFS). The active-site Acyl-thioester intermediate is cysteine 199.

It belongs to the LipB family.

It is found in the cytoplasm. The catalysed reaction is octanoyl-[ACP] + L-lysyl-[protein] = N(6)-octanoyl-L-lysyl-[protein] + holo-[ACP] + H(+). The protein operates within protein modification; protein lipoylation via endogenous pathway; protein N(6)-(lipoyl)lysine from octanoyl-[acyl-carrier-protein]: step 1/2. In terms of biological role, catalyzes the transfer of endogenously produced octanoic acid from octanoyl-acyl-carrier-protein onto the lipoyl domains of lipoate-dependent enzymes. Lipoyl-ACP can also act as a substrate although octanoyl-ACP is likely to be the physiological substrate. This chain is Octanoyltransferase, found in Prochlorococcus marinus (strain NATL1A).